The sequence spans 124 residues: Riboflavin kinase (124 aa).

10-15 (GLGKAA) serves as a coordination point for CDP. Mg(2+) contacts are provided by Thr39 and Asn41. Residues Thr93 and Glu101 each coordinate FMN. Position 106–109 (106–109 (DKLR)) interacts with CDP.

It belongs to the archaeal riboflavin kinase family. It depends on Mg(2+) as a cofactor.

It catalyses the reaction riboflavin + CTP = CDP + FMN + H(+). The protein operates within cofactor biosynthesis; FMN biosynthesis; FMN from riboflavin (CTP route): step 1/1. Functionally, catalyzes the CTP-dependent phosphorylation of riboflavin (vitamin B2) to form flavin mononucleotide (FMN). The sequence is that of Riboflavin kinase from Methanobrevibacter smithii (strain ATCC 35061 / DSM 861 / OCM 144 / PS).